The primary structure comprises 187 residues: MQILNPILPVMEDILGNLAELKASGKITNQQIDTVELQWYESERNILRKTSKSGREVAFRLLKEGQRLKHDDVVFVSESLVIAIEILPSEVIVLSPKTLPEMARACYEIGNKHSPLFLDGDEVTLPYDKPMFEWLQAAGFGPQKAERRLSQALRANSAQGHGHSHGHSHSHDHHGYHHHGDGNWHKH.

The interval arginine 154–histidine 187 is disordered. Residues glycine 162 to histidine 177 show a composition bias toward basic residues. Over residues histidine 178–histidine 187 the composition is skewed to basic and acidic residues.

The protein belongs to the UreE family.

The protein resides in the cytoplasm. In terms of biological role, involved in urease metallocenter assembly. Binds nickel. Probably functions as a nickel donor during metallocenter assembly. The sequence is that of Urease accessory protein UreE from Actinobacillus pleuropneumoniae (Haemophilus pleuropneumoniae).